Here is an 85-residue protein sequence, read N- to C-terminus: Elongation factor 1-beta (85 aa).

This sequence belongs to the EF-1-beta/EF-1-delta family.

Promotes the exchange of GDP for GTP in EF-1-alpha/GDP, thus allowing the regeneration of EF-1-alpha/GTP that could then be used to form the ternary complex EF-1-alpha/GTP/AAtRNA. The chain is Elongation factor 1-beta from Methanospirillum hungatei JF-1 (strain ATCC 27890 / DSM 864 / NBRC 100397 / JF-1).